Here is a 147-residue protein sequence, read N- to C-terminus: uncharacterized protein (147 aa).

The segment at 29 to 147 (PYGNNSVHQG…GHHHGHHHKH (119 aa)) is disordered. Composition is skewed to polar residues over residues 34 to 45 (SVHQGQPHTDQN) and 60 to 73 (PQAQYGNAGQNQPS). Over residues 75–92 (PFGGAGYTGPTAGTGFGN) the composition is skewed to gly residues. A compositionally biased stretch (basic residues) spans 122-147 (DGHHKKHGRKEHDHHHGHHHGHHHKH).

This is an uncharacterized protein from Caenorhabditis elegans.